Consider the following 62-residue polypeptide: UPF0337 protein XAC0100 (62 aa).

Belongs to the UPF0337 (CsbD) family.

The chain is UPF0337 protein XAC0100 from Xanthomonas axonopodis pv. citri (strain 306).